The following is a 213-amino-acid chain: Protein Flattop (213 aa).

Residues 127–213 are disordered; it reads VDQPAEQSKI…HNSRPASQEK (87 aa). Polar residues predominate over residues 151–213; that stretch reads QHIQDQSRPA…HNSRPASQEK (63 aa).

The protein belongs to the Flattop family.

Its subcellular location is the cytoplasm. It is found in the cytoskeleton. The protein resides in the cilium basal body. It localises to the cell projection. The protein localises to the cilium. Its subcellular location is the apical cell membrane. It is found in the cilium axoneme. Microtubule inner protein (MIP) part of the dynein-decorated doublet microtubules (DMTs) in cilia axoneme. Acts as a regulator of cilium basal body docking and positioning in mono- and multiciliated cells. Regulates basal body docking and cilia formation in multiciliated lung cells. Regulates kinocilium positioning and stereocilia bundle morphogenesis in the inner ear. The chain is Protein Flattop from Danio rerio (Zebrafish).